The chain runs to 500 residues: Lysine--tRNA ligase (500 aa).

Glutamate 411 and glutamate 418 together coordinate Mg(2+).

Belongs to the class-II aminoacyl-tRNA synthetase family. Homodimer. Requires Mg(2+) as cofactor.

The protein localises to the cytoplasm. It carries out the reaction tRNA(Lys) + L-lysine + ATP = L-lysyl-tRNA(Lys) + AMP + diphosphate. The chain is Lysine--tRNA ligase from Actinobacillus pleuropneumoniae serotype 5b (strain L20).